Consider the following 439-residue polypeptide: Serine--tRNA ligase (439 aa).

Residue 237-239 participates in L-serine binding; it reads TAE. 268–270 is a binding site for ATP; the sequence is RAE. Residue Glu291 participates in L-serine binding. Residue 362–365 participates in ATP binding; the sequence is EISS. Ser397 contacts L-serine.

Belongs to the class-II aminoacyl-tRNA synthetase family. Type-1 seryl-tRNA synthetase subfamily. As to quaternary structure, homodimer. The tRNA molecule binds across the dimer.

It localises to the cytoplasm. It carries out the reaction tRNA(Ser) + L-serine + ATP = L-seryl-tRNA(Ser) + AMP + diphosphate + H(+). The enzyme catalyses tRNA(Sec) + L-serine + ATP = L-seryl-tRNA(Sec) + AMP + diphosphate + H(+). It functions in the pathway aminoacyl-tRNA biosynthesis; selenocysteinyl-tRNA(Sec) biosynthesis; L-seryl-tRNA(Sec) from L-serine and tRNA(Sec): step 1/1. Its function is as follows. Catalyzes the attachment of serine to tRNA(Ser). Is also able to aminoacylate tRNA(Sec) with serine, to form the misacylated tRNA L-seryl-tRNA(Sec), which will be further converted into selenocysteinyl-tRNA(Sec). This is Serine--tRNA ligase from Afipia carboxidovorans (strain ATCC 49405 / DSM 1227 / KCTC 32145 / OM5) (Oligotropha carboxidovorans).